The chain runs to 210 residues: Large ribosomal subunit protein mL57 (210 aa).

The N-terminal 59 residues, methionine 1–phenylalanine 59, are a transit peptide targeting the mitochondrion.

The protein belongs to the ribonuclease III family. Mitochondrion-specific ribosomal protein mL57 subfamily. In terms of assembly, component of the mitochondrial large ribosomal subunit (mt-LSU). Mature yeast 74S mitochondrial ribosomes consist of a small (37S) and a large (54S) subunit. The 37S small subunit contains a 15S ribosomal RNA (15S mt-rRNA) and at least 32 different proteins. The 54S large subunit contains a 21S rRNA (21S mt-rRNA) and at least 45 different proteins. mL57 forms a heterodimer with mL44 and stabilizes rRNA expansion segments 1/2 at a membrane-facing protuberance close to the point of attachment of the ribosome to the translocon in the membrane.

It is found in the mitochondrion. Its function is as follows. Component of the mitochondrial ribosome (mitoribosome), a dedicated translation machinery responsible for the synthesis of mitochondrial genome-encoded proteins, including at least some of the essential transmembrane subunits of the mitochondrial respiratory chain. The mitoribosomes are attached to the mitochondrial inner membrane and translation products are cotranslationally integrated into the membrane. This Schizosaccharomyces pombe (strain 972 / ATCC 24843) (Fission yeast) protein is Large ribosomal subunit protein mL57 (mrp15).